Reading from the N-terminus, the 486-residue chain is Cobyric acid synthase (486 aa).

Residues 248–439 (VLRIVVPALP…LHGLFDTPHA (192 aa)) form the GATase cobBQ-type domain. The active-site Nucleophile is the cysteine 328. The active site involves histidine 431.

The protein belongs to the CobB/CobQ family. CobQ subfamily.

It functions in the pathway cofactor biosynthesis; adenosylcobalamin biosynthesis. Catalyzes amidations at positions B, D, E, and G on adenosylcobyrinic A,C-diamide. NH(2) groups are provided by glutamine, and one molecule of ATP is hydrogenolyzed for each amidation. In Burkholderia mallei (strain ATCC 23344), this protein is Cobyric acid synthase.